The following is a 206-amino-acid chain: Methyl-coenzyme M reductase operon protein C (206 aa).

In terms of assembly, MCR is composed of three subunits: alpha, beta, and gamma. The function of proteins C and D is not known.

The polypeptide is Methyl-coenzyme M reductase operon protein C (mcrC) (Methanosarcina barkeri (strain Fusaro / DSM 804)).